Here is an 85-residue protein sequence, read N- to C-terminus: UPF0386 protein Atu1321 (85 aa).

Belongs to the UPF0386 family.

The protein is UPF0386 protein Atu1321 of Agrobacterium fabrum (strain C58 / ATCC 33970) (Agrobacterium tumefaciens (strain C58)).